A 631-amino-acid polypeptide reads, in one-letter code: Probable basic-leucine zipper transcription factor F (631 aa).

A coiled-coil region spans residues lysine 35 to isoleucine 62. Disordered stretches follow at residues glutamine 46–isoleucine 117, leucine 154–phenylalanine 207, and methionine 264–glutamine 406. Low complexity-rich tracts occupy residues asparagine 155–glutamine 206 and asparagine 271–asparagine 360. Residues asparagine 328–glutamate 366 are a coiled coil. The 64-residue stretch at histidine 405–leucine 468 folds into the bZIP domain. A basic motif region spans residues lysine 407 to lysine 427. Positions leucine 433–leucine 440 are leucine-zipper. Residues glutamine 546 to arginine 631 form a disordered region. Low complexity-rich tracts occupy residues serine 563–serine 609 and proline 618–arginine 631.

This sequence belongs to the bZIP family.

The protein localises to the nucleus. Its function is as follows. Probable transcriptional regulator. In Dictyostelium discoideum (Social amoeba), this protein is Probable basic-leucine zipper transcription factor F (bzpF).